The following is a 319-amino-acid chain: Acetyl-coenzyme A carboxylase carboxyl transferase subunit alpha (319 aa).

The 255-residue stretch at 38–292 folds into the CoA carboxyltransferase C-terminal domain; that stretch reads ALDKKAADLL…GKAIASMLAG (255 aa).

Belongs to the AccA family. As to quaternary structure, acetyl-CoA carboxylase is a heterohexamer composed of biotin carboxyl carrier protein (AccB), biotin carboxylase (AccC) and two subunits each of ACCase subunit alpha (AccA) and ACCase subunit beta (AccD).

It localises to the cytoplasm. The enzyme catalyses N(6)-carboxybiotinyl-L-lysyl-[protein] + acetyl-CoA = N(6)-biotinyl-L-lysyl-[protein] + malonyl-CoA. It functions in the pathway lipid metabolism; malonyl-CoA biosynthesis; malonyl-CoA from acetyl-CoA: step 1/1. Component of the acetyl coenzyme A carboxylase (ACC) complex. First, biotin carboxylase catalyzes the carboxylation of biotin on its carrier protein (BCCP) and then the CO(2) group is transferred by the carboxyltransferase to acetyl-CoA to form malonyl-CoA. The polypeptide is Acetyl-coenzyme A carboxylase carboxyl transferase subunit alpha (Jannaschia sp. (strain CCS1)).